The following is a 162-amino-acid chain: Lymphocyte antigen 86 (162 aa).

The signal sequence occupies residues 1 to 20; the sequence is MKGFTATLFLWTLIFPSCSG. 3 cysteine pairs are disulfide-bonded: cysteine 33/cysteine 58, cysteine 45/cysteine 154, and cysteine 102/cysteine 112. Asparagine 96 carries an N-linked (GlcNAc...) asparagine glycan. Asparagine 156 carries an N-linked (GlcNAc...) asparagine glycan.

As to quaternary structure, M-shaped tetramer of two CD180-LY86 heterodimers. In terms of tissue distribution, highly expressed in B-cells, monocytes and tonsil.

The protein localises to the secreted. It localises to the extracellular space. Functionally, may cooperate with CD180 and TLR4 to mediate the innate immune response to bacterial lipopolysaccharide (LPS) and cytokine production. Important for efficient CD180 cell surface expression. The chain is Lymphocyte antigen 86 (LY86) from Homo sapiens (Human).